We begin with the raw amino-acid sequence, 244 residues long: Phosphoadenosine 5'-phosphosulfate reductase (244 aa).

The active-site Nucleophile; cysteine thiosulfonate intermediate is the C239.

It belongs to the PAPS reductase family. CysH subfamily.

The protein resides in the cytoplasm. The catalysed reaction is [thioredoxin]-disulfide + sulfite + adenosine 3',5'-bisphosphate + 2 H(+) = [thioredoxin]-dithiol + 3'-phosphoadenylyl sulfate. Its pathway is sulfur metabolism; hydrogen sulfide biosynthesis; sulfite from sulfate: step 3/3. Its function is as follows. Catalyzes the formation of sulfite from phosphoadenosine 5'-phosphosulfate (PAPS) using thioredoxin as an electron donor. The polypeptide is Phosphoadenosine 5'-phosphosulfate reductase (Yersinia enterocolitica serotype O:8 / biotype 1B (strain NCTC 13174 / 8081)).